The following is a 209-amino-acid chain: Ribosomal RNA large subunit methyltransferase E (209 aa).

S-adenosyl-L-methionine is bound by residues glycine 63, tryptophan 65, aspartate 83, aspartate 99, and aspartate 124. Lysine 164 functions as the Proton acceptor in the catalytic mechanism.

This sequence belongs to the class I-like SAM-binding methyltransferase superfamily. RNA methyltransferase RlmE family.

The protein localises to the cytoplasm. It carries out the reaction uridine(2552) in 23S rRNA + S-adenosyl-L-methionine = 2'-O-methyluridine(2552) in 23S rRNA + S-adenosyl-L-homocysteine + H(+). Its function is as follows. Specifically methylates the uridine in position 2552 of 23S rRNA at the 2'-O position of the ribose in the fully assembled 50S ribosomal subunit. The protein is Ribosomal RNA large subunit methyltransferase E of Escherichia coli O81 (strain ED1a).